Here is a 150-residue protein sequence, read N- to C-terminus: Galectin-1 (150 aa).

One can recognise a Galectin domain in the interval 9 to 141; it reads NQIKLQDDFK…FSSPVTVDIH (133 aa). 4 residues coordinate a carbohydrate: His-51, Arg-55, Asn-64, and Glu-75.

In terms of assembly, homotetramer. Oligomerization is required for carbohydrate binding. Most abundant in fruiting bodies. Very low levels of expression in asexual vegetative mycelia.

The protein localises to the secreted. The protein resides in the extracellular space. Its subcellular location is the extracellular matrix. It localises to the cell wall. It is found in the endomembrane system. Its function is as follows. Binds lactose. May play a role in fruiting body formation. This Coprinopsis cinerea (strain Okayama-7 / 130 / ATCC MYA-4618 / FGSC 9003) (Inky cap fungus) protein is Galectin-1 (Cgl1).